Consider the following 72-residue polypeptide: UPF0270 protein Ent638_3781 (72 aa).

The protein belongs to the UPF0270 family.

The protein is UPF0270 protein Ent638_3781 of Enterobacter sp. (strain 638).